We begin with the raw amino-acid sequence, 96 residues long: Co-chaperonin GroES (96 aa).

It belongs to the GroES chaperonin family. In terms of assembly, heptamer of 7 subunits arranged in a ring. Interacts with the chaperonin GroEL.

The protein localises to the cytoplasm. Together with the chaperonin GroEL, plays an essential role in assisting protein folding. The GroEL-GroES system forms a nano-cage that allows encapsulation of the non-native substrate proteins and provides a physical environment optimized to promote and accelerate protein folding. GroES binds to the apical surface of the GroEL ring, thereby capping the opening of the GroEL channel. The sequence is that of Co-chaperonin GroES from Haemophilus influenzae (strain PittGG).